A 303-amino-acid chain; its full sequence is UDP-3-O-acyl-N-acetylglucosamine deacetylase (303 aa).

Residues His-78, His-237, and Asp-241 each contribute to the Zn(2+) site. His-264 serves as the catalytic Proton donor.

Belongs to the LpxC family. Zn(2+) is required as a cofactor.

It catalyses the reaction a UDP-3-O-[(3R)-3-hydroxyacyl]-N-acetyl-alpha-D-glucosamine + H2O = a UDP-3-O-[(3R)-3-hydroxyacyl]-alpha-D-glucosamine + acetate. Its pathway is glycolipid biosynthesis; lipid IV(A) biosynthesis; lipid IV(A) from (3R)-3-hydroxytetradecanoyl-[acyl-carrier-protein] and UDP-N-acetyl-alpha-D-glucosamine: step 2/6. In terms of biological role, catalyzes the hydrolysis of UDP-3-O-myristoyl-N-acetylglucosamine to form UDP-3-O-myristoylglucosamine and acetate, the committed step in lipid A biosynthesis. The protein is UDP-3-O-acyl-N-acetylglucosamine deacetylase of Coxiella burnetii (strain CbuK_Q154) (Coxiella burnetii (strain Q154)).